The chain runs to 215 residues: ATP-dependent dethiobiotin synthetase BioD (215 aa).

13 to 18 (DIGKTV) contributes to the ATP binding site. Thr-17 is a Mg(2+) binding site. Lys-38 is an active-site residue. Thr-42 serves as a coordination point for substrate. ATP-binding positions include Asp-50, 115–118 (EGAG), and 175–176 (NH). Residues Asp-50 and Glu-115 each coordinate Mg(2+).

Belongs to the dethiobiotin synthetase family. Homodimer. Mg(2+) is required as a cofactor.

The protein localises to the cytoplasm. The enzyme catalyses (7R,8S)-7,8-diammoniononanoate + CO2 + ATP = (4R,5S)-dethiobiotin + ADP + phosphate + 3 H(+). The protein operates within cofactor biosynthesis; biotin biosynthesis; biotin from 7,8-diaminononanoate: step 1/2. In terms of biological role, catalyzes a mechanistically unusual reaction, the ATP-dependent insertion of CO2 between the N7 and N8 nitrogen atoms of 7,8-diaminopelargonic acid (DAPA, also called 7,8-diammoniononanoate) to form a ureido ring. This is ATP-dependent dethiobiotin synthetase BioD from Neisseria meningitidis serogroup B (strain ATCC BAA-335 / MC58).